A 569-amino-acid polypeptide reads, in one-letter code: Undecaprenyl phosphate-alpha-4-amino-4-deoxy-L-arabinose arabinosyl transferase 1 (569 aa).

A run of 12 helical transmembrane segments spans residues 27–47, 98–120, 129–149, 151–171, 194–214, 225–245, 275–295, 311–331, 334–354, 366–386, 396–416, and 420–440; these read GLILAFVMFYLLPLMSHGLWI, LFGVRIASALSTGVSVWLTYLLA, INAASALLYMSFGLIAGQAGY, NLDPQFTLWVNLSMVAVWFAI, LMTKGFLALLLPVLIALPYML, YGLVAVVVCALVSLPWVLAVH, PWWFYLPLLFASTLPWALLLP, AYLALWFLLPLAFFSLSSGKL, YIMPCLLPVALLMGQTVVKWL, GVFNTVLASVALVALLYLQAT, FSLSLAYIVVVGWIIANALQV, and LTLWAMPALGIGLLVALLPAA.

It belongs to the glycosyltransferase 83 family.

It localises to the cell inner membrane. It carries out the reaction 4-amino-4-deoxy-alpha-L-arabinopyranosyl di-trans,octa-cis-undecaprenyl phosphate + lipid IVA = lipid IIA + di-trans,octa-cis-undecaprenyl phosphate.. It functions in the pathway lipopolysaccharide metabolism; 4-amino-4-deoxy-beta-L-arabinose-lipid A biosynthesis. Functionally, catalyzes the transfer of the L-Ara4N moiety of the glycolipid undecaprenyl phosphate-alpha-L-Ara4N to lipid A. The modified arabinose is attached to lipid A and is required for resistance to polymyxin and cationic antimicrobial peptides. The polypeptide is Undecaprenyl phosphate-alpha-4-amino-4-deoxy-L-arabinose arabinosyl transferase 1 (Pseudomonas fluorescens (strain Pf0-1)).